Reading from the N-terminus, the 205-residue chain is MQRPEAWPRPHPGEGASAAQAGGAAPPTRATEQREPSLYTIKAVFILDNDGRRLLAKYYDDTFPSVKEQMVFEKNVFNKTSRTESEIAFLGGMTIVYKSSIDIFLYVVGSSSENELMLMSVLACLFDSLSHILRKNVEKRWLLENMDGAFLVLDETVDGGVILESDPQQVIQKVNFRTDDSGLTEQSVAQVLQSAKEQIKWSLLK.

The segment covering 1–12 (MQRPEAWPRPHP) has biased composition (basic and acidic residues). The disordered stretch occupies residues 1–33 (MQRPEAWPRPHPGEGASAAQAGGAAPPTRATEQ). Over residues 13 to 30 (GEGASAAQAGGAAPPTRA) the composition is skewed to low complexity.

Belongs to the adaptor complexes small subunit family. Oligomeric complex.

It localises to the cytoplasm. Its subcellular location is the cytosol. It is found in the endoplasmic reticulum-Golgi intermediate compartment membrane. The protein resides in the golgi apparatus membrane. The protein localises to the cytoplasmic vesicle. It localises to the COPI-coated vesicle membrane. Its function is as follows. The coatomer is a cytosolic protein complex that binds to dilysine motifs and reversibly associates with Golgi non-clathrin-coated vesicles, which further mediate biosynthetic protein transport from the ER, via the Golgi up to the trans Golgi network. Coatomer complex is required for budding from Golgi membranes, and is essential for the retrograde Golgi-to-ER transport of dilysine-tagged proteins. The zeta subunit may be involved in regulating the coat assembly and, hence, the rate of biosynthetic protein transport due to its association-dissociation properties with the coatomer complex. This chain is Coatomer subunit zeta-2 (Copz2), found in Mus musculus (Mouse).